Here is an 845-residue protein sequence, read N- to C-terminus: Poly(A) RNA polymerase gld-4 (845 aa).

The segment at 1–55 is disordered; that stretch reads MNEDSRLSSSQQPSTSTPRSSIPSTMNSDEPNTCRRLSQSQEQPSTSRTCKSETP. Residues 7–25 are compositionally biased toward low complexity; it reads LSSSQQPSTSTPRSSIPST. A compositionally biased stretch (polar residues) spans 26 to 49; that stretch reads MNSDEPNTCRRLSQSQEQPSTSRT. Mg(2+) is bound by residues Asp-139 and Asp-141. A PAP-associated domain is found at 276 to 335; that stretch reads NLGHLLLRFLELYSLEFNFEEMGISPGQCCYIPKSASGARYGHKQAQPGNLALEDPLLTA. A compositionally biased stretch (basic and acidic residues) spans 482 to 506; the sequence is KSLEKMPACDDNKKEEELVATRETD. Disordered regions lie at residues 482–733 and 788–845; these read KSLE…SEEP and NALT…RLQR. The segment covering 535–551 has biased composition (low complexity); that stretch reads TSTQSVNTSATVSTAAS. Composition is skewed to polar residues over residues 561-571 and 579-588; these read PGLSSSMGNQS and GINNRNNSAV. Basic and acidic residues predominate over residues 605-620; that stretch reads RESKRTQTTSEDKMQD. Residues 643–653 are compositionally biased toward basic residues; that stretch reads SHKHRNAHPQR. Composition is skewed to polar residues over residues 654 to 666, 695 to 732, 788 to 805, and 819 to 828; these read QRPSIRNLSQGSD, RQQTNTRNCGPTNNIPYDSFRSQNKNSTLDGSNNSSEE, NALTTSPMTPPSAHTSMQ, and DNNSATSSTD.

As to quaternary structure, interacts with gls-1 isoform C. The cofactor is Mg(2+). Mn(2+) serves as cofactor. In terms of tissue distribution, germline-specific.

Its subcellular location is the cytoplasm. It localises to the cytoplasmic granule. It is found in the perinuclear region. The catalysed reaction is RNA(n) + ATP = RNA(n)-3'-adenine ribonucleotide + diphosphate. In terms of biological role, cytoplasmic poly(A) RNA polymerase that adds successive AMP monomers to the 3'-end of specific RNAs, forming a poly(A) tail. The enzymatic activity is enhanced by its interaction with gls-1. Required, together with gld-2, for early meiotic progression in male and female germ cells and for gld-1 protein accumulation in the hermaphrodite germline. In the germline, forms a complex with gls-1 which directly binds to gld-1 mRNA and prevents its degradation. This is Poly(A) RNA polymerase gld-4 from Caenorhabditis elegans.